We begin with the raw amino-acid sequence, 503 residues long: ATP synthase subunit alpha (503 aa).

An ATP-binding site is contributed by Gly170–Thr177.

The protein belongs to the ATPase alpha/beta chains family. F-type ATPases have 2 components, CF(1) - the catalytic core - and CF(0) - the membrane proton channel. CF(1) has five subunits: alpha(3), beta(3), gamma(1), delta(1), epsilon(1). CF(0) has three main subunits: a(1), b(2) and c(9-12). The alpha and beta chains form an alternating ring which encloses part of the gamma chain. CF(1) is attached to CF(0) by a central stalk formed by the gamma and epsilon chains, while a peripheral stalk is formed by the delta and b chains.

Its subcellular location is the cell inner membrane. The catalysed reaction is ATP + H2O + 4 H(+)(in) = ADP + phosphate + 5 H(+)(out). Produces ATP from ADP in the presence of a proton gradient across the membrane. The alpha chain is a regulatory subunit. The chain is ATP synthase subunit alpha from Thermotoga neapolitana (strain ATCC 49049 / DSM 4359 / NBRC 107923 / NS-E).